Here is a 1420-residue protein sequence, read N- to C-terminus: DNA-directed RNA polymerase subunit beta' (1420 aa).

Positions 71, 73, 86, and 89 each coordinate Zn(2+). D461, D463, and D465 together coordinate Mg(2+). Residues C815, C889, C896, and C899 each coordinate Zn(2+).

This sequence belongs to the RNA polymerase beta' chain family. In terms of assembly, the RNAP catalytic core consists of 2 alpha, 1 beta, 1 beta' and 1 omega subunit. When a sigma factor is associated with the core the holoenzyme is formed, which can initiate transcription. Mg(2+) is required as a cofactor. Zn(2+) serves as cofactor.

The enzyme catalyses RNA(n) + a ribonucleoside 5'-triphosphate = RNA(n+1) + diphosphate. Functionally, DNA-dependent RNA polymerase catalyzes the transcription of DNA into RNA using the four ribonucleoside triphosphates as substrates. This is DNA-directed RNA polymerase subunit beta' from Haemophilus ducreyi (strain 35000HP / ATCC 700724).